We begin with the raw amino-acid sequence, 240 residues long: uncharacterized protein (240 aa).

Positions 1-30 (MNKSGMSLIITMLLLIGTAIVIGAAYYAWS) are cleaved as a signal peptide.

This is an uncharacterized protein from Methanocaldococcus jannaschii (strain ATCC 43067 / DSM 2661 / JAL-1 / JCM 10045 / NBRC 100440) (Methanococcus jannaschii).